A 1038-amino-acid chain; its full sequence is Protein transport protein SEC24 A (1038 aa).

The disordered stretch occupies residues 1–247; it reads MGTENQGYPN…PPHTGGFAQR (247 aa). Positions 22 to 33 are enriched in pro residues; sequence SAPPPGIPPQSG. Zn(2+) is bound by residues cysteine 371, cysteine 374, cysteine 393, and cysteine 396. Positions 371–396 are zinc finger-like; the sequence is CRRCRTYVNPFVTFTDSGRKWRCNIC.

The protein belongs to the SEC23/SEC24 family. SEC24 subfamily. As to quaternary structure, component of the coat protein complex II (COPII), composed of at least five proteins: the Sec23/24 complex, the Sec13/31 complex and Sar1. Interacts with SEC221, SEC23E/SEC23A, SEC23B, SEC23G/SEC23C and SEC23F/SEC23D. (Microbial infection) Interacts with turnip mosaic virus (TuMV) 6K2 in COPII-coated vesicles. In terms of tissue distribution, mainly expressed in pollen, leaves, inflorescences, roots and stems, and, to a lower extent, in cotyledons, petioles and hypocotyls.

The protein localises to the cytoplasmic vesicle. The protein resides in the COPII-coated vesicle membrane. It is found in the endoplasmic reticulum membrane. Its subcellular location is the golgi apparatus membrane. It localises to the cytoplasm. The protein localises to the cytosol. Functionally, essential protein. Component of the coat protein complex II (COPII), that covers ER-derived vesicles involved in transport from the endoplasmic reticulum to the Golgi apparatus. COPII is composed of at least five proteins: the SEC23/24 complex, the SEC13/31 complex, and the protein SAR1. Acts in the cytoplasm to promote the transport of secretory, plasma membrane, and vacuolar proteins from the endoplasmic reticulum to the Golgi complex. Involved in maintaining the dynamic identity of organelles of the early secretory pathway. Regulates cell size patterning, and prevents CDKA;1-, DEK1- and ACR4-dependent endoreduplication and giant cells formation in sepals. Required for male gametophytes (pollen grains) development and transmission. (Microbial infection) Contributes to viral systemic infection of turnip mosaic virus (TuMV) by triggering the formation of host endoplasmic reticulum (ER)-derived viral vesicles that carry the viral RNA (vRNA) to plasmodesmata for cell-to-cell viral movement. This chain is Protein transport protein SEC24 A, found in Arabidopsis thaliana (Mouse-ear cress).